A 333-amino-acid chain; its full sequence is Adenosine deaminase (333 aa).

Zn(2+) is bound by residues His-12 and His-14. The substrate site is built by His-14, Asp-16, and Gly-170. Residue His-197 participates in Zn(2+) binding. Glu-200 serves as the catalytic Proton donor. Residue Asp-278 participates in Zn(2+) binding. Substrate is bound at residue Asp-279.

Belongs to the metallo-dependent hydrolases superfamily. Adenosine and AMP deaminases family. Adenosine deaminase subfamily. Requires Zn(2+) as cofactor.

The catalysed reaction is adenosine + H2O + H(+) = inosine + NH4(+). It catalyses the reaction 2'-deoxyadenosine + H2O + H(+) = 2'-deoxyinosine + NH4(+). Its function is as follows. Catalyzes the hydrolytic deamination of adenosine and 2-deoxyadenosine. The sequence is that of Adenosine deaminase from Escherichia coli O81 (strain ED1a).